We begin with the raw amino-acid sequence, 843 residues long: Protein P (843 aa).

The tract at residues 1–177 (MPLSYQHFRK…FCGSPYSWEQ (177 aa)) is terminal protein domain (TP). A spacer region spans residues 178 to 346 (ELQHGRLVLQ…HCLFHIVNLI (169 aa)). Disordered regions lie at residues 221 to 240 (SRLG…QGGS) and 289 to 315 (VSTS…SRSQ). The span at 223-235 (LGPQPTQGQLAGL) shows a compositional bias: low complexity. The segment at 347-690 (DDWGPCAEHG…YLNLYPVARQ (344 aa)) is polymerase/reverse transcriptase domain (RT). The Reverse transcriptase domain maps to 357–600 (EHRIRTPRTP…YSLNFMGYVI (244 aa)). Positions 429, 551, and 552 each coordinate Mg(2+).

Belongs to the hepadnaviridae P protein family.

It carries out the reaction DNA(n) + a 2'-deoxyribonucleoside 5'-triphosphate = DNA(n+1) + diphosphate. The catalysed reaction is Endonucleolytic cleavage to 5'-phosphomonoester.. Its activity is regulated as follows. Activated by host HSP70 and HSP40 in vitro to be able to bind the epsilon loop of the pgRNA. Because deletion of the RNase H region renders the protein partly chaperone-independent, the chaperones may be needed indirectly to relieve occlusion of the RNA-binding site by this domain. Inhibited by several reverse-transcriptase inhibitors: Lamivudine, Adefovir and Entecavir. Multifunctional enzyme that converts the viral RNA genome into dsDNA in viral cytoplasmic capsids. This enzyme displays a DNA polymerase activity that can copy either DNA or RNA templates, and a ribonuclease H (RNase H) activity that cleaves the RNA strand of RNA-DNA heteroduplexes in a partially processive 3'- to 5'-endonucleasic mode. Neo-synthesized pregenomic RNA (pgRNA) are encapsidated together with the P protein, and reverse-transcribed inside the nucleocapsid. Initiation of reverse-transcription occurs first by binding the epsilon loop on the pgRNA genome, and is initiated by protein priming, thereby the 5'-end of (-)DNA is covalently linked to P protein. Partial (+)DNA is synthesized from the (-)DNA template and generates the relaxed circular DNA (RC-DNA) genome. After budding and infection, the RC-DNA migrates in the nucleus, and is converted into a plasmid-like covalently closed circular DNA (cccDNA). The activity of P protein does not seem to be necessary for cccDNA generation, and is presumably released from (+)DNA by host nuclear DNA repair machinery. The chain is Protein P from Homo sapiens (Human).